A 453-amino-acid chain; its full sequence is Cytochrome P450 monooxygenase CYP2 (453 aa).

A helical membrane pass occupies residues 13–29; it reads MVITMLHGSSTYSLLAS. Residue N85 is glycosylated (N-linked (GlcNAc...) asparagine). A heme-binding site is contributed by C397.

It belongs to the cytochrome P450 family. It depends on heme as a cofactor.

The protein localises to the membrane. It participates in secondary metabolite biosynthesis. Its function is as follows. Cytochrome P450 monooxygenase; part of the gene cluster that mediates the biosynthesis of a tyrosine-derived cytochalasan acting as a fungal signal recognized by resistant rice plants and leads to avirulence in Pi33 resistant rice cultivars. The first step in the pathway is catalyzed by the hybrid PKS-NRPS ACE1, assisted by the enoyl reductase RAP1, that are responsible for fusion of the tyrosine precursor and the polyketide backbone. The polyketide synthase module (PKS) of ACE1 is responsible for the synthesis of the polyketide backbone and the downstream nonribosomal peptide synthetase (NRPS) amidates the carboxyl end of the polyketide with the tyrosine precursor. Because ACE1 lacks a designated enoylreductase (ER) domain, the required activity is provided the enoyl reductase RAP1. Reduction by the hydrolyase ORFZ, followed by dehydration and intra-molecular Diels-Alder cyclization by the Diels-Alderase ORF3 then yield the required isoindolone-fused macrocycle. A number of oxidative steps catalyzed by the tailoring enzymes identified within the cluster, including cytochrome P450 monooxygenases CYP1 to CYP4, the FAD-linked oxidoreductase OXR2 and the short-chain dehydrogenase/reductase OXR1, are further required to afford the final cytochalasans that confer avirulence and which have still to be identified. The monooxygenase CYP1 has been shown to be a site-selective C-18 hydroxylase whereas the function of CYP3 is the site-selective epoxidation of the C-6/C-7 olefin that is present in some intermediate compounds. Finally, SYN2 and RAP2 are not required for avirulence in Pi33 resistant rice cultivars. The protein is Cytochrome P450 monooxygenase CYP2 of Pyricularia oryzae (strain 70-15 / ATCC MYA-4617 / FGSC 8958) (Rice blast fungus).